The following is a 448-amino-acid chain: Methylenetetrahydrofolate--tRNA-(uracil-5-)-methyltransferase TrmFO (448 aa).

13–18 (GAGLAG) contributes to the FAD binding site.

Belongs to the MnmG family. TrmFO subfamily. It depends on FAD as a cofactor.

It is found in the cytoplasm. The enzyme catalyses uridine(54) in tRNA + (6R)-5,10-methylene-5,6,7,8-tetrahydrofolate + NADH + H(+) = 5-methyluridine(54) in tRNA + (6S)-5,6,7,8-tetrahydrofolate + NAD(+). It carries out the reaction uridine(54) in tRNA + (6R)-5,10-methylene-5,6,7,8-tetrahydrofolate + NADPH + H(+) = 5-methyluridine(54) in tRNA + (6S)-5,6,7,8-tetrahydrofolate + NADP(+). In terms of biological role, catalyzes the folate-dependent formation of 5-methyl-uridine at position 54 (M-5-U54) in all tRNAs. In Streptococcus pyogenes serotype M1, this protein is Methylenetetrahydrofolate--tRNA-(uracil-5-)-methyltransferase TrmFO.